We begin with the raw amino-acid sequence, 457 residues long: Argininosuccinate lyase (457 aa).

Belongs to the lyase 1 family. Argininosuccinate lyase subfamily.

Its subcellular location is the cytoplasm. The catalysed reaction is 2-(N(omega)-L-arginino)succinate = fumarate + L-arginine. It functions in the pathway amino-acid biosynthesis; L-arginine biosynthesis; L-arginine from L-ornithine and carbamoyl phosphate: step 3/3. In Bacillus pumilus (strain SAFR-032), this protein is Argininosuccinate lyase.